A 297-amino-acid chain; its full sequence is Homoserine kinase (297 aa).

Residue 82–92 (PVSRGLGSSAA) coordinates ATP.

The protein belongs to the GHMP kinase family. Homoserine kinase subfamily.

It localises to the cytoplasm. It catalyses the reaction L-homoserine + ATP = O-phospho-L-homoserine + ADP + H(+). It functions in the pathway amino-acid biosynthesis; L-threonine biosynthesis; L-threonine from L-aspartate: step 4/5. Functionally, catalyzes the ATP-dependent phosphorylation of L-homoserine to L-homoserine phosphate. This Clostridium botulinum (strain Loch Maree / Type A3) protein is Homoserine kinase.